The following is a 432-amino-acid chain: Alcohol acyltransferase 9 (432 aa).

Active-site proton acceptor residues include His-156 and Asp-379.

Belongs to the plant acyltransferase family.

The catalysed reaction is 2-(methylsulfanyl)acetyl-CoA + butan-1-ol = butyl 2-(methylsulfanyl)acetate + CoA. It carries out the reaction ethanol + acetyl-CoA = ethyl acetate + CoA. The enzyme catalyses butan-1-ol + acetyl-CoA = butyl acetate + CoA. It catalyses the reaction butan-1-ol + propanoyl-CoA = butyl propanoate + CoA. Functionally, involved in the biosynthesis of volatile esters which confer kiwifruit flavor. Alcohol acyl transferase that can use a wide range of alcohols as substrate to produce esters. Exhibits acetyl-CoA:alcohol O-acyltransferase activity. This Actinidia chinensis var. chinensis (Chinese soft-hair kiwi) protein is Alcohol acyltransferase 9.